Here is a 397-residue protein sequence, read N- to C-terminus: UPF0761 membrane protein Kkor_1635 (397 aa).

6 consecutive transmembrane segments (helical) span residues 36-56, 92-112, 132-152, 168-188, 201-221, and 237-257; these read MLAL…FPSF, NLSA…MRSI, ILAY…SLAA, ILTF…LYMV, IAAV…AIFV, and IPIF…GVIV.

Belongs to the UPF0761 family.

The protein resides in the cell inner membrane. This is UPF0761 membrane protein Kkor_1635 from Kangiella koreensis (strain DSM 16069 / JCM 12317 / KCTC 12182 / SW-125).